Consider the following 156-residue polypeptide: Small ribosomal subunit protein uS7 (156 aa).

In terms of assembly, part of the 30S ribosomal subunit. Contacts proteins S9 and S11.

In terms of biological role, one of the primary rRNA binding proteins, it binds directly to 16S rRNA where it nucleates assembly of the head domain of the 30S subunit. Is located at the subunit interface close to the decoding center, probably blocks exit of the E-site tRNA. This chain is Small ribosomal subunit protein uS7, found in Rhodopseudomonas palustris (strain ATCC BAA-98 / CGA009).